A 348-amino-acid polypeptide reads, in one-letter code: Bombesin receptor-activated protein C6orf89 homolog (348 aa).

Topologically, residues 1-58 are cytoplasmic; sequence MDLAANEISIYDKLSETVDLVRQTGHQCGMSEKAIEKFIRQLLEKNEPQRGPPQYPLL. A helical membrane pass occupies residues 59-79; that stretch reads IAVYKVLLTLGLILFTAYFVI. Residues 80–348 are Extracellular-facing; sequence QPFSSLAPEP…ICDGTTLSDL (269 aa).

Homodimer. Interacts with BRS3. Interacts (via N-terminus) with SIN3B. In terms of processing, glycosylated.

It localises to the golgi apparatus membrane. It is found in the cytoplasm. Its function is as follows. Exhibits histone deacetylase (HDAC) enhancer properties. May play a role in cell cycle progression and wound repair of bronchial epithelial cells. This Mus musculus (Mouse) protein is Bombesin receptor-activated protein C6orf89 homolog.